The sequence spans 528 residues: Na(+)/H(+) antiporter NhaB (528 aa).

A run of 10 helical transmembrane segments spans residues Trp-20–Asn-39, Pro-66–Leu-86, Leu-97–Phe-117, Ala-139–Val-159, Ile-241–Val-261, Ala-304–Ile-324, Glu-349–Ile-369, Leu-390–Gly-410, Ala-448–Ile-468, and Val-476–Leu-496.

This sequence belongs to the NhaB Na(+)/H(+) (TC 2.A.34) antiporter family.

The protein resides in the cell inner membrane. The catalysed reaction is 2 Na(+)(in) + 3 H(+)(out) = 2 Na(+)(out) + 3 H(+)(in). Functionally, na(+)/H(+) antiporter that extrudes sodium in exchange for external protons. This chain is Na(+)/H(+) antiporter NhaB, found in Shewanella pealeana (strain ATCC 700345 / ANG-SQ1).